The sequence spans 416 residues: Squalene synthase (416 aa).

2 consecutive transmembrane segments (helical) span residues 285 to 304 (VINFCAIPQVMAIGTLNACY) and 386 to 406 (FISYDWMAVTSLAVSSAFLIA).

It belongs to the phytoene/squalene synthase family. Requires Mg(2+) as cofactor.

Its subcellular location is the endoplasmic reticulum membrane. It catalyses the reaction 2 (2E,6E)-farnesyl diphosphate + NADPH + H(+) = squalene + 2 diphosphate + NADP(+). The catalysed reaction is 2 (2E,6E)-farnesyl diphosphate + NADH + H(+) = squalene + 2 diphosphate + NAD(+). The protein operates within terpene metabolism; lanosterol biosynthesis; lanosterol from farnesyl diphosphate: step 1/3. This is Squalene synthase (fdfT) from Dictyostelium discoideum (Social amoeba).